A 665-amino-acid polypeptide reads, in one-letter code: Anaphase-promoting complex subunit 3 (665 aa).

One copy of the TPR 1 repeat lies at 115–148 (SCMLDVLGTMYKKAGFLKKATDCFVEAVSINPYN). The DNA-binding element occupies 191 to 257 (VPEPSFLKKS…HQSLKLQSQS (67 aa)). TPR repeat units lie at residues 329–362 (LLKLFGKGVYLLAQYKLREALNCFQSLPIEQQNT), 363–396 (PFVLAKLGITYFELVDYEKSEEVFQKLRDLSPSR), 431–464 (PESWCILANCFSLQREHSQALKCINRAIQLDPTF), 466–498 (YAYTLQGHEHSANEEYEKSKTSFRKAIRVNVRH), 499–532 (YNAWYGLGMVYLKTGRNDQADFHFQRAAEINPNN), 534–566 (VLITCIGMIYERCKDYKKALDFYDRACKLDEKS), 568–600 (LARFKKAKVLILLHDHDKALVELEQLKAIAPDE), and 601–634 (ANVHFLLGKIFKQMRKKNLALKHFTIAWNLDGKA).

The protein belongs to the APC3/CDC27 family. The APC/C is composed of at least 13 subunits: apc1, apc2, nuc2, apc4, apc5, cut9, apc8, apc10, apc11, hcn1, apc13, apc14 and apc15. Interacts with apc10 and cut9.

Its subcellular location is the nucleus. In terms of biological role, component of the anaphase-promoting complex/cyclosome (APC/C), a cell cycle-regulated E3 ubiquitin-protein ligase complex that controls progression through mitosis and the G1 phase of the cell cycle. The APC/C is thought to confer substrate specificity and, in the presence of ubiquitin-conjugating E2 enzymes, it catalyzes the formation of protein-ubiquitin conjugates that are subsequently degraded by the 26S proteasome. Interacts with spindle apparatus, chromosomes, or nuclear envelope, and interconnect nuclear and cytoskeletal functions in mitosis, so the elongation of the spindle in anaphase is blocked. The sequence is that of Anaphase-promoting complex subunit 3 (nuc2) from Schizosaccharomyces pombe (strain 972 / ATCC 24843) (Fission yeast).